The following is a 1036-amino-acid chain: Serine/threonine-protein kinase ULK2 (1036 aa).

Residues 9–271 (YSKRDLVGHG…FEAFFSHPFL (263 aa)) enclose the Protein kinase domain. Residues 15-23 (VGHGAFAVV) and lysine 39 contribute to the ATP site. Aspartate 131 serves as the catalytic Proton acceptor. Disordered stretches follow at residues 319 to 348 (ENLS…NSSC), 418 to 460 (TSTA…ADTA), 491 to 522 (CCCG…SLLS), 540 to 588 (QKLR…SSDW), and 656 to 695 (AEQQ…LNTE). The segment covering 335 to 348 (SKDSASTSSKNSSC) has biased composition (low complexity). Residues 418–428 (TSTASSGTNVH) show a composition bias toward polar residues. Serine 430 carries the post-translational modification Phosphoserine. Positions 504–521 (RNSSGSPVPQAQSPQSLL) are enriched in polar residues. A compositionally biased stretch (polar residues) spans 659–679 (QSKAVFGRSVSTGKLSDQQGK). Serine 771 and serine 780 each carry phosphoserine. The CTD-like region stretch occupies residues 812 to 1036 (ELPEETLMER…SALCHSTATV (225 aa)).

Belongs to the protein kinase superfamily. Ser/Thr protein kinase family. APG1/unc-51/ULK1 subfamily. As to quaternary structure, interacts with SYNGAP1. Component of a complex consisting of ATG13/KIAA0652, ULK1 and RB1CC1/FIP200. Interacts (via C-terminus) with ATG13/KIAA0652. Associates with the mammalian target of rapamycin complex 1 (mTORC1) through an interaction with RPTOR. Autophosphorylated. In response to nutrient limitation, probably phosphorylated and activated by AMPK, leading to activate autophagy.

It is found in the cytoplasmic vesicle membrane. The enzyme catalyses L-seryl-[protein] + ATP = O-phospho-L-seryl-[protein] + ADP + H(+). It catalyses the reaction L-threonyl-[protein] + ATP = O-phospho-L-threonyl-[protein] + ADP + H(+). In terms of biological role, serine/threonine-protein kinase involved in autophagy in response to starvation. Acts upstream of phosphatidylinositol 3-kinase PIK3C3 to regulate the formation of autophagophores, the precursors of autophagosomes. Part of regulatory feedback loops in autophagy: acts both as a downstream effector and a negative regulator of mammalian target of rapamycin complex 1 (mTORC1) via interaction with RPTOR. Activated via phosphorylation by AMPK, also acts as a negative regulator of AMPK through phosphorylation of the AMPK subunits PRKAA1, PRKAB2 and PRKAG1. May phosphorylate ATG13/KIAA0652, FRS2, FRS3 and RPTOR; however such data need additional evidences. Not involved in ammonia-induced autophagy or in autophagic response of cerebellar granule neurons (CGN) to low potassium concentration. Plays a role early in neuronal differentiation and is required for granule cell axon formation: may govern axon formation via Ras-like GTPase signaling and through regulation of the Rab5-mediated endocytic pathways within developing axons. The chain is Serine/threonine-protein kinase ULK2 (ULK2) from Homo sapiens (Human).